The primary structure comprises 260 residues: Snake venom serine protease homolog 1 (260 aa).

Residues 1–18 (MVLIRVLANLLILQLSYA) form the signal peptide. The propeptide occupies 19-24 (QKSSEL). Positions 25–251 (IIGGDECNIN…HLDWIKSIIA (227 aa)) constitute a Peptidase S1 domain. 6 disulfide bridges follow: Cys-31–Cys-165, Cys-52–Cys-68, Cys-100–Cys-258, Cys-144–Cys-212, Cys-176–Cys-191, and Cys-202–Cys-227. 3 N-linked (GlcNAc...) asparagine glycosylation sites follow: Asn-83, Asn-123, and Asn-124.

This sequence belongs to the peptidase S1 family. Snake venom subfamily. As to expression, expressed by the venom gland.

The protein localises to the secreted. Its function is as follows. Snake venom serine protease homolog that may act in the hemostasis system of the prey. The polypeptide is Snake venom serine protease homolog 1 (Trimeresurus stejnegeri (Chinese green tree viper)).